A 289-amino-acid polypeptide reads, in one-letter code: Ribosomal protein L11 methyltransferase (289 aa).

Threonine 134, glycine 155, aspartate 177, and asparagine 225 together coordinate S-adenosyl-L-methionine.

This sequence belongs to the methyltransferase superfamily. PrmA family.

The protein localises to the cytoplasm. It carries out the reaction L-lysyl-[protein] + 3 S-adenosyl-L-methionine = N(6),N(6),N(6)-trimethyl-L-lysyl-[protein] + 3 S-adenosyl-L-homocysteine + 3 H(+). Methylates ribosomal protein L11. This is Ribosomal protein L11 methyltransferase from Parasynechococcus marenigrum (strain WH8102).